We begin with the raw amino-acid sequence, 348 residues long: Signal recognition particle receptor FtsY (348 aa).

Residues 143-150 (GVNGVGKT), 225-229 (DTSGR), and 289-292 (TKMD) each bind GTP.

Belongs to the GTP-binding SRP family. FtsY subfamily. Part of the signal recognition particle protein translocation system, which is composed of SRP and FtsY.

The protein resides in the cell membrane. Its subcellular location is the cytoplasm. It carries out the reaction GTP + H2O = GDP + phosphate + H(+). Functionally, involved in targeting and insertion of nascent membrane proteins into the cytoplasmic membrane. Acts as a receptor for the complex formed by the signal recognition particle (SRP) and the ribosome-nascent chain (RNC). The polypeptide is Signal recognition particle receptor FtsY (Mycoplasma pneumoniae (strain ATCC 29342 / M129 / Subtype 1) (Mycoplasmoides pneumoniae)).